The primary structure comprises 65 residues: Large ribosomal subunit protein uL29 (65 aa).

The protein belongs to the universal ribosomal protein uL29 family.

This Xylella fastidiosa (strain Temecula1 / ATCC 700964) protein is Large ribosomal subunit protein uL29.